We begin with the raw amino-acid sequence, 27 residues long: Defensin-like protein 2 (27 aa).

Pyrrolidone carboxylic acid is present on glutamine 1.

The protein belongs to the DEFL family. As to quaternary structure, forms oligomers in its native state.

Its function is as follows. Possesses some antifungal activity sensitive to inorganic cations and antibacterial activity against B.megaterium. The sequence is that of Defensin-like protein 2 from Brassica campestris (Field mustard).